The primary structure comprises 400 residues: Peroxisome biogenesis factor 16 (400 aa).

Residues 176 to 226 form a disordered region; that stretch reads QKQFQNKRPAVTMSINNNNNINNNDNNNINNNNNTNDDNFNNNNNNNNNRR. Residues 190 to 224 are compositionally biased toward low complexity; sequence INNNNNINNNDNNNINNNNNTNDDNFNNNNNNNNN.

The protein belongs to the peroxin-16 family.

It is found in the cytoplasm. Functionally, required for peroxisome membrane biogenesis. This chain is Peroxisome biogenesis factor 16 (pex16), found in Dictyostelium discoideum (Social amoeba).